Reading from the N-terminus, the 1067-residue chain is UPF0507 protein KLLA0D01133g (1067 aa).

Positions 280–432 constitute a VPS9 domain; the sequence is IVEDQELEHR…FHQDTVDSLT (153 aa).

Belongs to the UPF0507 family.

This Kluyveromyces lactis (strain ATCC 8585 / CBS 2359 / DSM 70799 / NBRC 1267 / NRRL Y-1140 / WM37) (Yeast) protein is UPF0507 protein KLLA0D01133g.